The following is a 627-amino-acid chain: MSAATACASPAAARPPLHIPLRSPPSAAHLPSAAASRRASSAACRCTASASASASPSTWDWTRWTRHFADVDQAESYASLLKFQLEEAVDNEDFAEASKLKKAILEATGNDAVAQVMSELKTAIEEQRYQDASRLTKLARTNLVGWWVGYAKDTDDSIGRIVRISPGVGRYVAKSFSPRQLVTASSGTPLFEIFLVRDDDETYTMKVVHMRPTKGTSSASSVSSATAESPAKEENESSLESSAISEGITDEANTDTTLKGDEDVEDKEQDVGNAKDSSVEGLKSVLNFFKSRIPEFKVQVINVDVSEEAELASDSSEELVQDDVKSTSENSLEDSTTEELQQDDVPDGDSDSAEDSKSPEMKLFISGVVHNKEDAGAKSYVRVPAEINNLEKDSFELYIPGKGSDRDLADTKAAKQKVADMAAKLASELMPSDVAKALWGTTKSSSKINKEVQELLKLTLSKARVKLTENTIFNRIITDSNGSDPFSGLYVGAFSPYGPEVVQLRRKFGHWNSTDEVEFFEYVEAVKLTGDLSVPAGQITFRAKIGKGKRLENRGAYPEEFGVIASYKGQGRIAQPGFKNPRWVDGELLVLNGKSTIPHLGGAELGFLYSVPEQSFLVLFDRLKLPE.

Disordered regions lie at residues 1 to 34, 212 to 277, and 308 to 359; these read MSAA…PSAA, PTKG…AKDS, and EAEL…SKSP. Residues 1–45 constitute a chloroplast transit peptide; it reads MSAATACASPAAARPPLHIPLRSPPSAAHLPSAAASRRASSAACR. Positions 217-229 are enriched in low complexity; sequence SSASSVSSATAES. Composition is skewed to acidic residues over residues 308-321 and 331-353; these read EAEL…ELVQ and SLED…SDSA.

The protein resides in the plastid. It is found in the chloroplast. Its function is as follows. Together with EX1, enables higher plants to perceive singlet oxygen as a stress signal in plastid that activates a genetically determined nuclear stress response program which triggers a programmed cell death (PCD). This transfer of singlet oxygen-induced stress-related signals from the plastid to the nucleus that triggers genetically controlled PCD pathway is unique to photosynthetic eukaryotes and operates under mild stress conditions, impeding photosystem II (PSII) without causing photooxidative damage of the plant. In Oryza sativa subsp. japonica (Rice), this protein is Protein EXECUTER 2, chloroplastic.